A 328-amino-acid polypeptide reads, in one-letter code: Hydrogenase-2 operon protein HybA (328 aa).

Residues 1–27 (MNRRNFIKAASCGALLTGALPSVSHAA) form the signal peptide. 4Fe-4S ferredoxin-type domains follow at residues 38–68 (LGML…RNPQ), 103–134 (NGYA…KDPK), and 136–165 (GIVH…YDYN). [4Fe-4S] cluster-binding residues include cysteine 47, cysteine 50, cysteine 53, cysteine 57, cysteine 112, cysteine 115, cysteine 120, cysteine 124, cysteine 145, cysteine 148, cysteine 151, cysteine 155, cysteine 174, cysteine 177, cysteine 193, and cysteine 197.

The cofactor is [4Fe-4S] cluster.

Its subcellular location is the periplasm. Functionally, participates in the periplasmic electron-transferring activity of hydrogenase 2 during its catalytic turnover. In Escherichia coli O157:H7, this protein is Hydrogenase-2 operon protein HybA (hybA).